The primary structure comprises 432 residues: Killer cell immunoglobulin-like receptor 3DL1 (432 aa).

The signal sequence occupies residues M1 to A21. Residues H22–N335 lie on the Extracellular side of the membrane. Ig-like C2-type domains lie at G42–Y100, G135–Y202, and G238–A301. N44 carries N-linked (GlcNAc...) asparagine glycosylation. C49 and C95 are joined by a disulfide. An N-linked (GlcNAc...) asparagine glycan is attached at N137. Disulfide bonds link C142–C195 and C245–C294. N300 carries an N-linked (GlcNAc...) asparagine glycan. A helical transmembrane segment spans residues L336–S356. Residues C357–K432 are Cytoplasmic-facing.

Belongs to the immunoglobulin superfamily.

It localises to the cell membrane. Its function is as follows. Receptor on natural killer (NK) cells. Inhibits the activity of NK cells thus preventing cell lysis. This chain is Killer cell immunoglobulin-like receptor 3DL1 (Kir3dl1), found in Mus musculus (Mouse).